The sequence spans 264 residues: Thymidylate synthase (264 aa).

Residue Arg21 coordinates dUMP. Position 51 (His51) interacts with (6R)-5,10-methylene-5,6,7,8-tetrahydrofolate. DUMP is bound at residue 126–127 (RR). The Nucleophile role is filled by Cys146. Residues 166-169 (RSCD), Asn177, and 207-209 (HLY) each bind dUMP. Asp169 lines the (6R)-5,10-methylene-5,6,7,8-tetrahydrofolate pocket. Residue Ala263 participates in (6R)-5,10-methylene-5,6,7,8-tetrahydrofolate binding.

Belongs to the thymidylate synthase family. Bacterial-type ThyA subfamily. Homodimer.

The protein resides in the cytoplasm. It carries out the reaction dUMP + (6R)-5,10-methylene-5,6,7,8-tetrahydrofolate = 7,8-dihydrofolate + dTMP. It functions in the pathway pyrimidine metabolism; dTTP biosynthesis. Functionally, catalyzes the reductive methylation of 2'-deoxyuridine-5'-monophosphate (dUMP) to 2'-deoxythymidine-5'-monophosphate (dTMP) while utilizing 5,10-methylenetetrahydrofolate (mTHF) as the methyl donor and reductant in the reaction, yielding dihydrofolate (DHF) as a by-product. This enzymatic reaction provides an intracellular de novo source of dTMP, an essential precursor for DNA biosynthesis. This is Thymidylate synthase from Escherichia coli O9:H4 (strain HS).